A 561-amino-acid polypeptide reads, in one-letter code: Putative transport protein DNO_0009 (561 aa).

Helical transmembrane passes span 4–24 (VAIT…LGNI), 29–49 (VGLS…IMNL), 74–94 (FGLI…FFAS), 104–124 (AFAA…YYLF), and 166–186 (MGYA…MWLI). 2 RCK C-terminal domains span residues 198–283 (LQFF…ILGE) and 285–369 (AGHE…LIGN). The next 6 membrane-spanning stretches (helical) occupy residues 379 to 399 (MLPV…PIYL), 411 to 433 (AGGP…LYWF), 447 to 467 (IVLF…STLL), 472 to 492 (FSWI…AGII), 501 to 521 (YLTI…LAFA), and 538 to 558 (VYPL…VLLW).

The protein belongs to the AAE transporter (TC 2.A.81) family. YidE subfamily.

The protein resides in the cell membrane. The sequence is that of Putative transport protein DNO_0009 from Dichelobacter nodosus (strain VCS1703A).